The primary structure comprises 506 residues: Alpha-L-fucosidase 1 (506 aa).

The N-terminal stretch at 1–23 is a signal peptide; that stretch reads MNSQITLFFFFFSILSLSQISNS. Residues Asn22, Asn82, Asn248, Asn320, Asn355, and Asn487 are each glycosylated (N-linked (GlcNAc...) asparagine).

Belongs to the glycosyl hydrolase 29 family.

It is found in the secreted. The protein localises to the extracellular space. It localises to the apoplast. The enzyme catalyses an alpha-L-fucoside + H2O = L-fucose + an alcohol. Hydrolyzes both 3- and 4-linked fucoses in Lewis determinants. Not active on neither 2-linked fucose nor on fucose in alpha-1,3-linkage to the innermost GlcNAc. This is Alpha-L-fucosidase 1 (FUC1) from Arabidopsis thaliana (Mouse-ear cress).